The sequence spans 459 residues: UDP-N-acetylmuramate--L-alanine ligase (459 aa).

118 to 124 (GTHGKTT) is a binding site for ATP.

The protein belongs to the MurCDEF family.

It localises to the cytoplasm. It catalyses the reaction UDP-N-acetyl-alpha-D-muramate + L-alanine + ATP = UDP-N-acetyl-alpha-D-muramoyl-L-alanine + ADP + phosphate + H(+). Its pathway is cell wall biogenesis; peptidoglycan biosynthesis. Functionally, cell wall formation. The polypeptide is UDP-N-acetylmuramate--L-alanine ligase (Clostridium beijerinckii (strain ATCC 51743 / NCIMB 8052) (Clostridium acetobutylicum)).